Here is a 377-residue protein sequence, read N- to C-terminus: Ribosomal RNA large subunit methyltransferase G (377 aa).

It belongs to the methyltransferase superfamily. RlmG family.

The protein localises to the cytoplasm. It catalyses the reaction guanosine(1835) in 23S rRNA + S-adenosyl-L-methionine = N(2)-methylguanosine(1835) in 23S rRNA + S-adenosyl-L-homocysteine + H(+). In terms of biological role, specifically methylates the guanine in position 1835 (m2G1835) of 23S rRNA. This Shewanella oneidensis (strain ATCC 700550 / JCM 31522 / CIP 106686 / LMG 19005 / NCIMB 14063 / MR-1) protein is Ribosomal RNA large subunit methyltransferase G.